The primary structure comprises 134 residues: Replication enhancer protein (134 aa).

It belongs to the geminiviridae replication enhancer protein family. As to quaternary structure, homooligomer. Interacts with the replication-associated protein (REP). Interacts with host proliferating cell nuclear antigen (PCNA). Interacts with host retinoblastoma-related protein 1 (RBR1), and may thereby deregulate the host cell cycle. Oligomerization and interaction with PCNA are necessary for optimal replication enhancement.

In terms of biological role, increases viral DNA accumulation. Enhances infectivity and symptom expression. This chain is Replication enhancer protein, found in Tomato leaf curl virus (strain Australia) (ToLCV).